The primary structure comprises 88 residues: Large ribosomal subunit protein bL27 (88 aa).

Positions 1 to 24 are disordered; sequence MAHKKGTGSTRNGRDSNSKRLGVK.

It belongs to the bacterial ribosomal protein bL27 family.

The protein is Large ribosomal subunit protein bL27 of Prochlorococcus marinus (strain MIT 9303).